The sequence spans 478 residues: Keratin, type II cytoskeletal 8 (478 aa).

Residues 1-97 are head; it reads MSIRVTQKSY…DPNIQAVRTQ (97 aa). Position 9 is a phosphoserine; by PKC/PRKCE (Ser-9). A Glycyl lysine isopeptide (Lys-Gly) (interchain with G-Cter in SUMO2) cross-link involves residue Lys-11. Ser-13, Ser-15, Ser-21, and Ser-22 each carry phosphoserine. A disordered region spans residues 16–44; it reads APRSFSSRSYTSGPGSRISSSAFSRVGSS. Position 23 is an omega-N-methylarginine (Arg-23). Phosphoserine; by PKC/PRKCE is present on Ser-24. Thr-26 bears the Phosphothreonine mark. Residues Ser-27 and Ser-31 each carry the phosphoserine modification. Arg-32 bears the Omega-N-methylarginine mark. A phosphoserine mark is found at Ser-34 and Ser-39. Arg-40 carries the omega-N-methylarginine modification. Phosphoserine is present on residues Ser-43 and Ser-44. Position 48 is an asymmetric dimethylarginine; alternate (Arg-48). Arg-48 carries the omega-N-methylarginine; alternate modification. Ser-81 is modified (phosphoserine; by MAPK). The segment at 98 to 133 is coil 1A; it reads EKEQIKTLNNKFASFIDKVRHLEQQNKVLETKWNLL. Residues 98 to 409 form the IF rod domain; sequence EKEQIKTLNN…KLLEGEESRL (312 aa). At Lys-108 the chain carries N6-malonyllysine. Residues Lys-129 and Lys-137 each participate in a glycyl lysine isopeptide (Lys-Gly) (interchain with G-Cter in SUMO2) cross-link. Residues 134-150 form a linker 1 region; that stretch reads QQQKTARSNIDNMFESY. Positions 151-242 are coil 1B; that stretch reads INNLRRQLET…QLYEEEIREM (92 aa). Residue Lys-204 forms a Glycyl lysine isopeptide (Lys-Gly) (interchain with G-Cter in SUMO1); alternate linkage. Residue Lys-204 forms a Glycyl lysine isopeptide (Lys-Gly) (interchain with G-Cter in SUMO2); alternate linkage. Residue Lys-214 is modified to N6-acetyllysine. Tyr-235 carries the post-translational modification Phosphotyrosine. The linker 12 stretch occupies residues 243-266; that stretch reads QSQISDTSVVLEMDNNRNLDLDGI. The coil 2 stretch occupies residues 267-405; the sequence is IAEVKAQYEE…ATYRKLLEGE (139 aa). Positions 268-389 are necessary for interaction with PNN; it reads AEVKAQYEEI…EYQELMNVKL (122 aa). Residue Lys-271 forms a Glycyl lysine isopeptide (Lys-Gly) (interchain with G-Cter in SUMO2) linkage. Ser-281 carries the phosphoserine modification. A Glycyl lysine isopeptide (Lys-Gly) (interchain with G-Cter in SUMO2) cross-link involves residue Lys-292. A Glycyl lysine isopeptide (Lys-Gly) (interchain with G-Cter in SUMO2); alternate cross-link involves residue Lys-302. Residue Lys-302 is modified to N6-acetyllysine; alternate. Residue Lys-311 forms a Glycyl lysine isopeptide (Lys-Gly) (interchain with G-Cter in SUMO2) linkage. Lys-332 is covalently cross-linked (Glycyl lysine isopeptide (Lys-Gly) (interchain with G-Cter in SUMO2); alternate). An N6-acetyllysine; alternate modification is found at Lys-332. Residue Ser-337 is modified to Phosphoserine. Residue Lys-400 forms a Glycyl lysine isopeptide (Lys-Gly) (interchain with G-Cter in SUMO2) linkage. Residues 406 to 478 are tail; sequence ESRLESGMQN…VSESSDVLSK (73 aa). A phosphoserine mark is found at Ser-407, Ser-411, Ser-417, Ser-424, and Ser-433. Lys-467 participates in a covalent cross-link: Glycyl lysine isopeptide (Lys-Gly) (interchain with G-Cter in SUMO1); alternate. Lys-467 participates in a covalent cross-link: Glycyl lysine isopeptide (Lys-Gly) (interchain with G-Cter in SUMO2); alternate. 4 positions are modified to phosphoserine: Ser-470, Ser-472, Ser-473, and Ser-477.

Belongs to the intermediate filament family. Heterotetramer of two type I and two type II keratins. Forms a heterodimer with KRT18. Associates with KRT20. Interacts with PNN. When associated with KRT19, interacts with DMD. Interacts with TCHP. Interacts with APEX1. Interacts with GPER1. Interacts with EPPK1. Interacts with PKP1 and PKP2. Post-translationally, O-glycosylated. O-GlcNAcylation at multiple sites increases solubility, and decreases stability by inducing proteasomal degradation. In terms of processing, O-glycosylated (O-GlcNAcylated), in a cell cycle-dependent manner. In terms of tissue distribution, expressed in bladder, liver, exocervix and (in very low amounts) esophagus.

The protein localises to the cytoplasm. The protein resides in the nucleus. It localises to the nucleoplasm. It is found in the nucleus matrix. In terms of biological role, together with KRT19, helps to link the contractile apparatus to dystrophin at the costameres of striated muscle. This is Keratin, type II cytoskeletal 8 (KRT8) from Bos taurus (Bovine).